We begin with the raw amino-acid sequence, 298 residues long: Probable 2-(5''-triphosphoribosyl)-3'-dephosphocoenzyme-A synthase 2 (298 aa).

Belongs to the CitG/MdcB family.

It catalyses the reaction 3'-dephospho-CoA + ATP = 2'-(5''-triphospho-alpha-D-ribosyl)-3'-dephospho-CoA + adenine. This chain is Probable 2-(5''-triphosphoribosyl)-3'-dephosphocoenzyme-A synthase 2, found in Salmonella typhi.